A 1071-amino-acid chain; its full sequence is ATP-dependent helicase/deoxyribonuclease subunit B (1071 aa).

It belongs to the helicase family. AddB/RexB type 2 subfamily. Heterodimer of AddA and RexB. The cofactor is Mg(2+).

Its function is as follows. The heterodimer acts as both an ATP-dependent DNA helicase and an ATP-dependent, dual-direction single-stranded exonuclease. Recognizes the chi site generating a DNA molecule suitable for the initiation of homologous recombination. This subunit has 5' -&gt; 3' nuclease activity but not helicase activity. The chain is ATP-dependent helicase/deoxyribonuclease subunit B from Streptococcus pyogenes serotype M12 (strain MGAS2096).